The primary structure comprises 160 residues: MPLELDLQVASAAPDLPSEAQFRAWCELALRQRPESELTIRLVDEAEGLELNSTYRHKDYATNVLSFPADVPDELLDIPLLGDLVICAPVVAREALEQRKPLQAHWAHLVIHGCLHLLGYDHIDDAEAEEMETLERELLAELGHPDPYACDDEEPPSKEK.

His112, His116, and His122 together coordinate Zn(2+). The disordered stretch occupies residues 141–160 (ELGHPDPYACDDEEPPSKEK).

It belongs to the endoribonuclease YbeY family. It depends on Zn(2+) as a cofactor.

It localises to the cytoplasm. In terms of biological role, single strand-specific metallo-endoribonuclease involved in late-stage 70S ribosome quality control and in maturation of the 3' terminus of the 16S rRNA. In Pseudomonas aeruginosa (strain UCBPP-PA14), this protein is Endoribonuclease YbeY.